A 2195-amino-acid polypeptide reads, in one-letter code: COPII coat assembly protein SEC16 (2195 aa).

Positions 1–20 (MTPEAKKRKNQKKKLKQKQK) are enriched in basic residues. Residues 1-112 (MTPEAKKRKN…ADSNDLPDNS (112 aa)) are disordered. Basic and acidic residues-rich tracts occupy residues 21-32 (KAAEKAASHSEE) and 49-59 (SVNRTESDIAS). Phosphoserine is present on serine 28. Positions 66–79 (VSSSTNISPANETQ) are enriched in polar residues. Serine 73 carries the post-translational modification Phosphoserine. Residues 86–102 (QELHHKLLNDSDQHDIT) show a composition bias toward basic and acidic residues. The residue at position 144 (serine 144) is a Phosphoserine. Disordered regions lie at residues 201–233 (PSDGNLLSPELSSGDTPTHNVPLGTKDNEINDD), 247–381 (NVLP…FHGH), 436–555 (TQSS…KASR), 594–616 (GTPNQQVSVPNIVSPKPPVVKDN), and 643–708 (SKKG…QSPV). The span at 210-219 (ELSSGDTPTH) shows a compositional bias: polar residues. Positions 257 to 276 (EDERLKLETHVSTEEKKQDI) are enriched in basic and acidic residues. Over residues 282 to 292 (AENLFTSSTEP) the composition is skewed to polar residues. At serine 313 the chain carries Phosphoserine. The segment covering 314–329 (DQKVPWEEDVKKDFHN) has biased composition (basic and acidic residues). Positions 330–341 (ENTNNTQESAPN) are enriched in polar residues. Composition is skewed to basic and acidic residues over residues 342–381 (TDDRDKGYEGNEALKKSESCTAADERSYSEETSEDIFHGH) and 450–479 (STDKNADVTSKSQEKHEDLFAASGNDEKLP). Residues serine 472 and serine 483 each carry the phosphoserine modification. Over residues 489–501 (SGKTENSMQTSTE) the composition is skewed to polar residues. Positions 512–533 (ENDDDLLDDDDSFLASSEEEDT) are enriched in acidic residues. Polar residues-rich tracts occupy residues 534-545 (VPNTDNTTNLTS) and 594-604 (GTPNQQVSVPN). Residue threonine 595 is modified to Phosphothreonine. Serine 607, serine 660, serine 663, serine 665, serine 674, serine 678, serine 681, serine 701, serine 704, serine 706, serine 759, serine 762, serine 765, serine 768, serine 843, serine 1511, serine 1515, serine 1578, serine 1602, serine 1603, serine 1611, and serine 1617 each carry phosphoserine. Over residues 657–666 (RFGSGNSFSS) the composition is skewed to polar residues. Polar residues predominate over residues 693–708 (EPRSSRTNSAISQSPV). Disordered stretches follow at residues 1656-1731 (VHET…TVNP) and 1751-1804 (GTDA…QDEN). The segment covering 1673–1682 (MPEDESHTSH) has biased composition (basic and acidic residues). 2 stretches are compositionally biased toward polar residues: residues 1683-1693 (DNSNADQNTLK) and 1775-1786 (ENISKSASSAYL). Residues serine 1778 and serine 1875 each carry the phosphoserine modification. Residues 1917 to 1936 (SFELSESTSQAQSNGNVASE) form a disordered region. A phosphoserine mark is found at serine 1973, serine 1986, and serine 1992. Positions 1976–2031 (DKYNDVIEDESDDDNMSTDEAKNRKEEKKNVNMKKETKPSNKDIDDKSNGWFGWLK) are disordered. A compositionally biased stretch (acidic residues) spans 1981–1992 (VIEDESDDDNMS). The span at 1994-2023 (DEAKNRKEEKKNVNMKKETKPSNKDIDDKS) shows a compositional bias: basic and acidic residues. Threonine 2049 carries the phosphothreonine modification. Residues 2054-2072 (EKLKRWVNKDATEEEKQKI) are compositionally biased toward basic and acidic residues. Residues 2054–2195 (EKLKRWVNKD…GYVNVMDNIQ (142 aa)) are disordered. Serine 2130 bears the Phosphoserine mark. Over residues 2131–2143 (PTGPNPNNSPSPS) the composition is skewed to pro residues.

The protein belongs to the SEC16 family. As to quaternary structure, interacts with SEC23, SEC31 and SED4.

The protein localises to the endoplasmic reticulum membrane. In terms of biological role, involved in the initiation of assembly of the COPII coat required for the formation of transport vesicles from the endoplasmic reticulum (ER) and the selection of cargo molecules. Also involved in autophagy. The chain is COPII coat assembly protein SEC16 (SEC16) from Saccharomyces cerevisiae (strain ATCC 204508 / S288c) (Baker's yeast).